The following is a 188-amino-acid chain: Peptide deformylase (188 aa).

Positions 109 and 152 each coordinate Fe cation. Glutamate 153 is a catalytic residue. Histidine 156 is a Fe cation binding site.

Belongs to the polypeptide deformylase family. The cofactor is Fe(2+).

The catalysed reaction is N-terminal N-formyl-L-methionyl-[peptide] + H2O = N-terminal L-methionyl-[peptide] + formate. Removes the formyl group from the N-terminal Met of newly synthesized proteins. Requires at least a dipeptide for an efficient rate of reaction. N-terminal L-methionine is a prerequisite for activity but the enzyme has broad specificity at other positions. In Chloroflexus aurantiacus (strain ATCC 29366 / DSM 635 / J-10-fl), this protein is Peptide deformylase.